A 129-amino-acid polypeptide reads, in one-letter code: Large ribosomal subunit protein bL12 (129 aa).

The protein belongs to the bacterial ribosomal protein bL12 family. In terms of assembly, homodimer. Part of the ribosomal stalk of the 50S ribosomal subunit. Forms a multimeric L10(L12)X complex, where L10 forms an elongated spine to which 2 to 4 L12 dimers bind in a sequential fashion. Binds GTP-bound translation factors.

Forms part of the ribosomal stalk which helps the ribosome interact with GTP-bound translation factors. Is thus essential for accurate translation. The protein is Large ribosomal subunit protein bL12 of Maridesulfovibrio salexigens (strain ATCC 14822 / DSM 2638 / NCIMB 8403 / VKM B-1763) (Desulfovibrio salexigens).